Reading from the N-terminus, the 1805-residue chain is Kinesin-like protein KIF13A (1805 aa).

One can recognise a Kinesin motor domain in the interval 5-352 (KVKVAVRVRP…LRYADRAKRI (348 aa)). 102 to 109 (GQTGSGKS) serves as a coordination point for ATP. The stretch at 359–436 (NEDPNAKVIR…QLESMGISLE (78 aa)) forms a coiled coil. In terms of domain architecture, FHA spans 469-519 (HTRVGADTSQDIQLFGIGIQPQHCEIDIASDGDVTLTPKENARSCVNGTLV). The span at 556 to 567 (EKETGPPEHDLD) shows a compositional bias: basic and acidic residues. Disordered regions lie at residues 556-575 (EKETGPPEHDLDAASEASSE) and 633-656 (QQLSPDRQPQSSGPDRLAYSSQTA). Coiled coils occupy residues 602-775 (VQVL…LYGK) and 1100-1138 (DALIKRREYLDEQIKKVSNKTEKTEDDVEREAQLVEQWV). Phosphoserine is present on S636. S1287 is modified (phosphoserine). Over residues 1385–1396 (TPNVHNVSSSRP) the composition is skewed to polar residues. Residues 1385 to 1404 (TPNVHNVSSSRPDLSGFDED) are disordered. A phosphoserine mark is found at S1454, I1481, S1490, and M1494. Residues 1507–1531 (PSGSNGSSMPVEHNSKREKKIDSEE) are disordered. Positions 1518–1547 (EHNSKREKKIDSEEEENELEAINRKLISSQ) form a coiled coil. Over residues 1519 to 1528 (HNSKREKKID) the composition is skewed to basic and acidic residues. Phosphoserine is present on residues S1529 and S1572. Low complexity predominate over residues 1612–1621 (MVVPSSDSSD). The disordered stretch occupies residues 1612 to 1645 (MVVPSSDSSDQLAIQTKDADSTEHSTPSLVHDFR). S1648 and S1698 each carry phosphoserine. Residues 1749-1779 (GLTDSSAGELSSRRSLPNKTGGKTVSDGLHH) form a disordered region. Positions 1751 to 1771 (TDSSAGELSSRRSLPNKTGGK) are enriched in polar residues.

The protein belongs to the TRAFAC class myosin-kinesin ATPase superfamily. Kinesin family. As to quaternary structure, interacts with AP2B1. Interacts with ZFYVE26. Interacts with AP1G1 and AP1G2. In terms of tissue distribution, widely expressed, with highest levels in heart, brain and skeletal muscle.

Its subcellular location is the cytoplasm. It is found in the cytoskeleton. It localises to the microtubule organizing center. The protein resides in the centrosome. The protein localises to the midbody. Its subcellular location is the endosome membrane. It is found in the golgi apparatus membrane. Functionally, plus end-directed microtubule-dependent motor protein involved in intracellular transport and regulating various processes such as mannose-6-phosphate receptor (M6PR) transport to the plasma membrane, endosomal sorting during melanosome biogenesis and cytokinesis. Mediates the transport of M6PR-containing vesicles from trans-Golgi network to the plasma membrane via direct interaction with the AP-1 complex. During melanosome maturation, required for delivering melanogenic enzymes from recycling endosomes to nascent melanosomes by creating peripheral recycling endosomal subdomains in melanocytes. Also required for the abscission step in cytokinesis: mediates translocation of ZFYVE26, and possibly TTC19, to the midbody during cytokinesis. The chain is Kinesin-like protein KIF13A (KIF13A) from Homo sapiens (Human).